Here is a 75-residue protein sequence, read N- to C-terminus: Small ribosomal subunit protein bS18 (75 aa).

Belongs to the bacterial ribosomal protein bS18 family. As to quaternary structure, part of the 30S ribosomal subunit. Forms a tight heterodimer with protein bS6.

In terms of biological role, binds as a heterodimer with protein bS6 to the central domain of the 16S rRNA, where it helps stabilize the platform of the 30S subunit. The chain is Small ribosomal subunit protein bS18 from Cereibacter sphaeroides (strain KD131 / KCTC 12085) (Rhodobacter sphaeroides).